A 389-amino-acid polypeptide reads, in one-letter code: Stilbene synthase 3 (389 aa).

Residue 55-58 (KFQR) participates in substrate binding. C164 is an active-site residue. Substrate is bound by residues L267 and 305–307 (GGR).

The protein belongs to the thiolase-like superfamily. Chalcone/stilbene synthases family. As to quaternary structure, homodimer.

It localises to the cytoplasm. The enzyme catalyses 4-coumaroyl-CoA + 3 malonyl-CoA + 3 H(+) = trans-resveratrol + 4 CO2 + 4 CoA. It functions in the pathway phytoalexin biosynthesis; 3,4',5-trihydroxystilbene biosynthesis; 3,4',5-trihydroxystilbene from trans-4-coumarate: step 2/2. The polypeptide is Stilbene synthase 3 (Arachis hypogaea (Peanut)).